The primary structure comprises 195 residues: Peptidyl-tRNA hydrolase (195 aa).

A tRNA-binding site is contributed by Tyr-17. The active-site Proton acceptor is His-22. The tRNA site is built by Tyr-68, Asn-70, and Asn-116.

The protein belongs to the PTH family. As to quaternary structure, monomer.

The protein resides in the cytoplasm. The catalysed reaction is an N-acyl-L-alpha-aminoacyl-tRNA + H2O = an N-acyl-L-amino acid + a tRNA + H(+). Functionally, hydrolyzes ribosome-free peptidyl-tRNAs (with 1 or more amino acids incorporated), which drop off the ribosome during protein synthesis, or as a result of ribosome stalling. In terms of biological role, catalyzes the release of premature peptidyl moieties from peptidyl-tRNA molecules trapped in stalled 50S ribosomal subunits, and thus maintains levels of free tRNAs and 50S ribosomes. The chain is Peptidyl-tRNA hydrolase from Shewanella sp. (strain ANA-3).